Consider the following 301-residue polypeptide: Glycine cleavage system transcriptional activator homolog (301 aa).

The 58-residue stretch at 10 to 67 (PPLNSLKSFESAARYLSFTKAADELCVTQAAVSHQIKLLEXFLGIDLFKRKNRSLELT) folds into the HTH lysR-type domain. Residues 27 to 46 (FTKAADELCVTQAAVSHQIK) constitute a DNA-binding region (H-T-H motif).

This sequence belongs to the LysR transcriptional regulatory family.

The protein localises to the cytoplasm. Not known, the gcv operon regulated by the E.coli homolog does not exist in H.influenzae, so it probably acts as a transcriptional regulator on some other operon. This Haemophilus influenzae (strain ATCC 51907 / DSM 11121 / KW20 / Rd) protein is Glycine cleavage system transcriptional activator homolog (gcvA).